A 41-amino-acid chain; its full sequence is MLVVEKSINTSYAYSFLGINKCLKKFNIDIVDVNASQKYLY.

Its subcellular location is the plastid. The protein localises to the chloroplast. This is an uncharacterized protein from Trieres chinensis (Marine centric diatom).